A 276-amino-acid chain; its full sequence is Undecaprenyl-diphosphatase (276 aa).

6 consecutive transmembrane segments (helical) span residues Arg43 to Phe63, Leu85 to Ile105, Leu109 to Ala129, Ala183 to Ser203, Val218 to Leu238, and Ile254 to Ala274.

The protein belongs to the UppP family.

It is found in the cell inner membrane. The catalysed reaction is di-trans,octa-cis-undecaprenyl diphosphate + H2O = di-trans,octa-cis-undecaprenyl phosphate + phosphate + H(+). In terms of biological role, catalyzes the dephosphorylation of undecaprenyl diphosphate (UPP). Confers resistance to bacitracin. This Pseudomonas syringae pv. syringae (strain B728a) protein is Undecaprenyl-diphosphatase.